The primary structure comprises 189 residues: Ornithine decarboxylase antizyme 2 (189 aa).

Residue Ser-186 is modified to Phosphoserine.

It belongs to the ODC antizyme family. Interacts with ODC1 and thereby sterically blocks ODC homodimerization. Interacts with AZIN2; this interaction disrupts the interaction between the antizyme and ODC1.

The protein localises to the nucleus. Its function is as follows. Ornithine decarboxylase (ODC) antizyme protein that negatively regulates ODC activity and intracellular polyamine biosynthesis and uptake in response to increased intracellular polyamine levels. Binds to ODC monomers, inhibiting the assembly of the functional ODC homodimers. Does not target the ODC monomers for degradation, which allows a protein synthesis-independent restoration of ODC activity. Involved in the translocation of AZIN2 from ER-Golgi intermediate compartment (ERGIC) to the cytosol. The protein is Ornithine decarboxylase antizyme 2 (Oaz2) of Mus musculus (Mouse).